The primary structure comprises 547 residues: Cilia- and flagella- associated protein 210 (547 aa).

Positions 184–254 (KLNVEKAFKE…EIEMKKKQGK (71 aa)) form a coiled coil. Positions 210-237 (KDHLKQIKEHEEEEERRRKEEEKDAEEI) are disordered.

In terms of assembly, microtubule inner protein component of sperm flagellar doublet microtubules. In terms of tissue distribution, expressed in trachea multiciliated cells.

Its subcellular location is the cytoplasm. It localises to the cytoskeleton. It is found in the cilium axoneme. The protein resides in the flagellum axoneme. Microtubule inner protein (MIP) part of the dynein-decorated doublet microtubules (DMTs) in cilia axoneme, which is required for motile cilia beating. In Bos taurus (Bovine), this protein is Cilia- and flagella- associated protein 210 (CFAP210).